We begin with the raw amino-acid sequence, 106 residues long: Iron-sulfur cluster assembly protein CyaY (106 aa).

Belongs to the frataxin family.

Involved in iron-sulfur (Fe-S) cluster assembly. May act as a regulator of Fe-S biogenesis. The polypeptide is Iron-sulfur cluster assembly protein CyaY (Pectobacterium atrosepticum (strain SCRI 1043 / ATCC BAA-672) (Erwinia carotovora subsp. atroseptica)).